A 173-amino-acid chain; its full sequence is T-cell receptor beta-2 chain C region (173 aa).

Residues 1 to 146 (EDLRNVTPPK…GVLSATILYE (146 aa)) are c region. Residues asparagine 67 and asparagine 116 are each glycosylated (N-linked (GlcNAc...) asparagine). Residues 147–168 (ILLGKATLYAVLVSGLVLMAMV) form a helical membrane-spanning segment. At 169–173 (KKKNS) the chain is on the cytoplasmic side.

The protein resides in the membrane. The chain is T-cell receptor beta-2 chain C region from Mus musculus (Mouse).